A 90-amino-acid chain; its full sequence is Putative regulatory protein NT01CX_2250 (90 aa).

Belongs to the RemA family.

This chain is Putative regulatory protein NT01CX_2250, found in Clostridium novyi (strain NT).